We begin with the raw amino-acid sequence, 266 residues long: Energy-coupling factor transporter transmembrane protein EcfT (266 aa).

A run of 7 helical transmembrane segments spans residues 26-46 (VIAT…RSVT), 47-67 (LAGL…HYIL), 69-89 (GIKP…LSTP), 116-136 (LIWL…IALT), 151-171 (LPVH…PTLI), 192-212 (SLVA…LSAF), and 246-266 (YAVT…KKAL).

This sequence belongs to the energy-coupling factor EcfT family. In terms of assembly, forms a stable energy-coupling factor (ECF) transporter complex composed of 2 membrane-embedded substrate-binding proteins (S component), 2 ATP-binding proteins (A component) and 2 transmembrane proteins (T component). May be able to interact with more than 1 S component at a time.

Its subcellular location is the cell membrane. Its function is as follows. Transmembrane (T) component of an energy-coupling factor (ECF) ABC-transporter complex. Unlike classic ABC transporters this ECF transporter provides the energy necessary to transport a number of different substrates. The protein is Energy-coupling factor transporter transmembrane protein EcfT of Heliobacterium modesticaldum (strain ATCC 51547 / Ice1).